We begin with the raw amino-acid sequence, 317 residues long: Mitochondrial thiamine pyrophosphate carrier 1 (317 aa).

The next 6 helical transmembrane spans lie at 21-41 (AVSG…ARSV), 86-106 (VPAS…YAWL), 122-142 (LAVG…LDLL), 176-196 (GGAW…GIYE), 207-227 (LPWL…AAVF), and 281-300 (GLTM…LWVY). Solcar repeat units lie at residues 22–109 (VSGL…LNTA), 116–201 (PPQA…CTIA), and 206–306 (GLPW…CLRL).

It belongs to the mitochondrial carrier (TC 2.A.29) family.

It is found in the mitochondrion inner membrane. In terms of biological role, mitochondrial transporter that mediates uptake of thiamine pyrophosphate (ThPP) into mitochondria. This Eremothecium gossypii (strain ATCC 10895 / CBS 109.51 / FGSC 9923 / NRRL Y-1056) (Yeast) protein is Mitochondrial thiamine pyrophosphate carrier 1 (TPC1).